Here is a 204-residue protein sequence, read N- to C-terminus: Putative F-box protein L168 (204 aa).

Residues 1-46 (MNLCDLFDEIIIGIIDELSDRDKIKFMTTCSRFYYFIDKTKYFDIY) form the F-box domain. Residues 161–184 (NETNKITNNHTNKKINNNKKHQNN) are disordered. Residues 171-183 (TNKKINNNKKHQN) are compositionally biased toward basic residues.

This is Putative F-box protein L168 from Acanthamoeba polyphaga (Amoeba).